Reading from the N-terminus, the 246-residue chain is Large ribosomal subunit protein uL30-like 1 (246 aa).

Serine 54 carries the post-translational modification Phosphoserine.

It belongs to the universal ribosomal protein uL30 family.

The protein is Large ribosomal subunit protein uL30-like 1 (Rpl7l1) of Mus musculus (Mouse).